Here is a 218-residue protein sequence, read N- to C-terminus: 25 kDa calcium-binding protein (218 aa).

EF-hand domains follow at residues 24 to 59, 66 to 101, 128 to 163, and 171 to 206; these read GAKT…AYKS, PSSD…YLTG, AKLD…TYAE, and PTKE…SLQK. The Ca(2+) site is built by Asp37, Arg43, Asp48, Asp79, Asn81, Asp83, Asp90, Asp141, Asp143, Ser145, Gln147, Glu152, Asp184, Asn186, Asp188, Ser190, and Glu195.

In terms of biological role, expected to play a crucial role in calcium-dependent regulation of ciliary movement. The sequence is that of 25 kDa calcium-binding protein from Tetrahymena thermophila.